A 239-amino-acid chain; its full sequence is Peptidyl-tRNA hydrolase (239 aa).

Residue tyrosine 14 coordinates tRNA. Catalysis depends on histidine 19, which acts as the Proton acceptor. Phenylalanine 64, asparagine 66, and asparagine 112 together coordinate tRNA. The segment at 188–225 is disordered; the sequence is GGKPDAEEPQAPKKQVGQSHIHKARNAAQPKKLPATGP.

Belongs to the PTH family. In terms of assembly, monomer.

It localises to the cytoplasm. The catalysed reaction is an N-acyl-L-alpha-aminoacyl-tRNA + H2O = an N-acyl-L-amino acid + a tRNA + H(+). In terms of biological role, hydrolyzes ribosome-free peptidyl-tRNAs (with 1 or more amino acids incorporated), which drop off the ribosome during protein synthesis, or as a result of ribosome stalling. Its function is as follows. Catalyzes the release of premature peptidyl moieties from peptidyl-tRNA molecules trapped in stalled 50S ribosomal subunits, and thus maintains levels of free tRNAs and 50S ribosomes. The sequence is that of Peptidyl-tRNA hydrolase from Sinorhizobium fredii (strain NBRC 101917 / NGR234).